Here is a 384-residue protein sequence, read N- to C-terminus: Alanine racemase (384 aa).

Catalysis depends on lysine 42, which acts as the Proton acceptor; specific for D-alanine. N6-(pyridoxal phosphate)lysine is present on lysine 42. A substrate-binding site is contributed by arginine 140. The active-site Proton acceptor; specific for L-alanine is the tyrosine 271. A substrate-binding site is contributed by methionine 319.

The protein belongs to the alanine racemase family. Homodimer. Pyridoxal 5'-phosphate serves as cofactor.

It catalyses the reaction L-alanine = D-alanine. It functions in the pathway amino-acid biosynthesis; D-alanine biosynthesis; D-alanine from L-alanine: step 1/1. Catalyzes the interconversion of L-alanine and D-alanine. The polypeptide is Alanine racemase (alr) (Mycobacterium tuberculosis (strain CDC 1551 / Oshkosh)).